We begin with the raw amino-acid sequence, 319 residues long: Putative ribose-phosphate pyrophosphokinase 2 (319 aa).

ATP contacts are provided by residues 40–42 (DGE) and 99–100 (RQ). A Mg(2+)-binding site is contributed by H133. D-ribose 5-phosphate is bound by residues D222 and 226–230 (NTGRT).

Belongs to the ribose-phosphate pyrophosphokinase family. Class I subfamily. In terms of assembly, homohexamer. It depends on Mg(2+) as a cofactor.

It localises to the cytoplasm. It catalyses the reaction D-ribose 5-phosphate + ATP = 5-phospho-alpha-D-ribose 1-diphosphate + AMP + H(+). The protein operates within metabolic intermediate biosynthesis; 5-phospho-alpha-D-ribose 1-diphosphate biosynthesis; 5-phospho-alpha-D-ribose 1-diphosphate from D-ribose 5-phosphate (route I): step 1/1. Involved in the biosynthesis of the central metabolite phospho-alpha-D-ribosyl-1-pyrophosphate (PRPP) via the transfer of pyrophosphoryl group from ATP to 1-hydroxyl of ribose-5-phosphate (Rib-5-P). This is Putative ribose-phosphate pyrophosphokinase 2 from Streptococcus pneumoniae serotype 4 (strain ATCC BAA-334 / TIGR4).